Consider the following 238-residue polypeptide: Acyl-protein thioesterase 1 (238 aa).

Residues Ser-120, Asp-174, and His-219 each act as charge relay system in the active site.

This sequence belongs to the AB hydrolase superfamily. AB hydrolase 2 family.

The protein resides in the cytoplasm. It is found in the nucleus. The catalysed reaction is S-hexadecanoyl-L-cysteinyl-[protein] + H2O = L-cysteinyl-[protein] + hexadecanoate + H(+). Its function is as follows. Hydrolyzes fatty acids from S-acylated cysteine residues in proteins with a strong preference for palmitoylated G-alpha proteins over other acyl substrates. Mediates the deacylation of G-alpha proteins such as GPA1 in vivo, but has weak or no activity toward palmitoylated Ras proteins. Has weak lysophospholipase activity in vitro; however such activity may not exist in vivo. The protein is Acyl-protein thioesterase 1 of Cryptococcus neoformans var. neoformans serotype D (strain B-3501A) (Filobasidiella neoformans).